Consider the following 214-residue polypeptide: Adenylate kinase (214 aa).

Residue 10 to 15 (GAGKGT) coordinates ATP. The tract at residues 30–59 (STGDMLRAAVKAGTPLGLEAKKVMDAGQLV) is NMP. Residues Thr31, Arg36, 57 to 59 (QLV), 85 to 88 (GFPR), and Gln92 each bind AMP. Positions 122–159 (GRRVHPGSGRVYHIVFNQPKVEGKDDVTGEDLAIRPDD) are LID. ATP is bound by residues Arg123 and 132-133 (VY). The AMP site is built by Arg156 and Arg167. ATP is bound at residue Gln200.

Belongs to the adenylate kinase family. In terms of assembly, monomer.

It localises to the cytoplasm. The catalysed reaction is AMP + ATP = 2 ADP. The protein operates within purine metabolism; AMP biosynthesis via salvage pathway; AMP from ADP: step 1/1. In terms of biological role, catalyzes the reversible transfer of the terminal phosphate group between ATP and AMP. Plays an important role in cellular energy homeostasis and in adenine nucleotide metabolism. The polypeptide is Adenylate kinase (Shewanella halifaxensis (strain HAW-EB4)).